The primary structure comprises 452 residues: Trigger factor (452 aa).

Residues 170 to 256 (DSIVKVDFVE…IKSIKKRDLP (87 aa)) enclose the PPIase FKBP-type domain.

This sequence belongs to the FKBP-type PPIase family. Tig subfamily.

It is found in the cytoplasm. The catalysed reaction is [protein]-peptidylproline (omega=180) = [protein]-peptidylproline (omega=0). Involved in protein export. Acts as a chaperone by maintaining the newly synthesized protein in an open conformation. Functions as a peptidyl-prolyl cis-trans isomerase. The polypeptide is Trigger factor (Borreliella afzelii (strain PKo) (Borrelia afzelii)).